We begin with the raw amino-acid sequence, 123 residues long: Succinate dehydrogenase hydrophobic membrane anchor subunit (123 aa).

The Cytoplasmic portion of the chain corresponds to 1-13 (MAETEKMKYGSLN). A helical transmembrane segment spans residues 14–34 (RFAQAVTGLFLLFFLGVHLYV). Topologically, residues 35-59 (AHIDFGHPVAFFSSVINQLHNPWWL) are extracellular. The helical transmembrane segment at 60 to 81 (AFFLIFVYIITYHGINGLNHIV) threads the bilayer. Heme is bound at residue His-72. At 82–91 (ADTSISEKAK) the chain is on the cytoplasmic side. Residues 92–116 (RNIGIALMVIYVITIIYGTILALLV) form a helical membrane-spanning segment.

Part of an enzyme complex containing four subunits: a flavoprotein, an iron-sulfur protein, plus two membrane-anchoring proteins, SdhC and SdhD. Heme serves as cofactor.

Its subcellular location is the cell membrane. The protein operates within carbohydrate metabolism; tricarboxylic acid cycle. Membrane-anchoring subunit of succinate dehydrogenase (SDH). The chain is Succinate dehydrogenase hydrophobic membrane anchor subunit (sdhD) from Thermoplasma acidophilum (strain ATCC 25905 / DSM 1728 / JCM 9062 / NBRC 15155 / AMRC-C165).